The primary structure comprises 255 residues: 5'-nucleotidase SurE (255 aa).

Residues D8, D9, S39, and N95 each contribute to the a divalent metal cation site.

Belongs to the SurE nucleotidase family. A divalent metal cation serves as cofactor.

Its subcellular location is the cytoplasm. The catalysed reaction is a ribonucleoside 5'-phosphate + H2O = a ribonucleoside + phosphate. In terms of biological role, nucleotidase that shows phosphatase activity on nucleoside 5'-monophosphates. This chain is 5'-nucleotidase SurE, found in Thermosipho africanus (strain TCF52B).